A 68-amino-acid chain; its full sequence is Conotoxin phi-MiXXVIIB (68 aa).

The N-terminal stretch at 1-29 is a signal peptide; that stretch reads MRFFFLLLTVALFLTSITGDDAERMLGMK. The propeptide occupies 30–35; it reads EGGYVR. 4 disulfides stabilise this stretch: Cys-38–Cys-49, Cys-42–Cys-51, Cys-45–Cys-56, and Cys-50–Cys-61. Pro-44 is modified (4-hydroxyproline).

This sequence belongs to the conotoxin G2 superfamily. 1 family. Expressed by the venom duct.

The protein localises to the secreted. This peptide promotes cell proliferation (EC(50)=17.85 uM) and inhibits apoptosis (EC(50)=2.2 uM). The protein is Conotoxin phi-MiXXVIIB of Conus miles (Soldier cone).